The sequence spans 169 residues: Disulfide bond formation protein B (169 aa).

The Cytoplasmic portion of the chain corresponds to 1–14 (MNNLTLSLRRERRL). Residues 15-31 (LVLLALVCLALLAGALY) form a helical membrane-spanning segment. The Periplasmic segment spans residues 32-49 (LQYVKNEDPCPLCIIQRY). Cysteine 41 and cysteine 44 are disulfide-bonded. The helical transmembrane segment at 50–64 (FFVLIAVFAFIGAGM) threads the bilayer. The Cytoplasmic segment spans residues 65-71 (ASGAGVA). The helical transmembrane segment at 72 to 89 (VTEALIVLSAAAGVGTAA) threads the bilayer. Over 90-144 (RHLYVQLNPGFSCGFDALQPVVDSLPPARWLPGVFKVAGLCETVYPPIFGILLPG) the chain is Periplasmic. Cysteine 102 and cysteine 130 are joined by a disulfide. The chain crosses the membrane as a helical span at residues 145 to 163 (WALIAFVLIAVPVAVSLLR). Over 164–169 (HRGRLR) the chain is Cytoplasmic.

It belongs to the DsbB family.

It is found in the cell inner membrane. Its function is as follows. Required for disulfide bond formation in some periplasmic proteins. Acts by oxidizing the DsbA protein. The polypeptide is Disulfide bond formation protein B (Burkholderia mallei (strain ATCC 23344)).